A 266-amino-acid polypeptide reads, in one-letter code: Protein-ADP-ribose hydrolase (266 aa).

The 192-residue stretch at 74-265 (TDLKDLKPIK…LYKEAFNRDA (192 aa)) folds into the Macro domain. Residues aspartate 93, isoleucine 94, and asparagine 107 each contribute to the ADP-D-ribose site. The Zn(2+) site is built by cysteine 113, histidine 118, and cysteine 120. Positions 120, 121, 122, 212, 213, 214, and 216 each coordinate ADP-D-ribose.

The protein belongs to the MacroD-type family. Zn-Macro subfamily. The cofactor is Zn(2+).

It carries out the reaction 4-O-(ADP-D-ribosyl)-L-aspartyl-[protein] + H2O = L-aspartyl-[protein] + ADP-D-ribose + H(+). In terms of biological role, ADP-ribosylhydrolase that specifically reverses the SirTM-mediated mono-ADP-ribosylation at an asparatate residue of GcvH-L, by releasing ADP-ribose from the target protein. May play a role in the regulation of the response to host-induced oxidative stress. This Staphylococcus aureus (strain MSSA476) protein is Protein-ADP-ribose hydrolase.